Consider the following 1010-residue polypeptide: PHD finger protein 20 (1010 aa).

Tudor domains lie at H4 to E69 and G83 to R147. Disordered regions lie at residues I142–L373 and E483–K609. Residues R147 to V246 show a composition bias toward basic and acidic residues. Phosphoserine is present on S159. The segment at residues K257 to T269 is a DNA-binding region (a.T hook). Over residues T267–P280 the composition is skewed to polar residues. 3 stretches are compositionally biased toward basic and acidic residues: residues K292 to R325, E483 to G493, and A525 to R541. The C2H2-type zinc-finger motif lies at F455–S485. The segment covering V542–T554 has biased composition (basic residues). A PHD-type zinc finger spans residues R657–P703. A disordered region spans residues R804–S827. At K841 the chain carries N6-acetyllysine. Residues S876 and S878 each carry the phosphoserine modification. Positions L877 to K902 are disordered. Positions D886–K902 are enriched in basic and acidic residues.

As to quaternary structure, homodimer; disulfide-linked. Component of some MLL1/MLL complex, at least composed of the core components KMT2A/MLL1, ASH2L, HCFC1, WDR5 and RBBP5, as well as the facultative components BACC1, CHD8, E2F6, HSP70, INO80C, KANSL1, LAS1L, MAX, MCRS1, MGA, MYST1/MOF, PELP1, PHF20, PRP31, RING2, RUVB1/TIP49A, RUVB2/TIP49B, SENP3, TAF1, TAF4, TAF6, TAF7, TAF9 and TEX10. Component of the NSL complex at least composed of MOF/KAT8, KANSL1, KANSL2, KANSL3, MCRS1, PHF20, OGT1/OGT, WDR5 and HCFC1. In terms of processing, ubiquitinated by TRIM26; leading to proteasomal degradation.

The protein resides in the nucleus. Its function is as follows. Contributes to methyllysine-dependent p53/TP53 stabilization and up-regulation after DNA damage. Methyllysine-binding protein, component of the MOF histone acetyltransferase protein complex. Not required for maintaining the global histone H4 'Lys-16' acetylation (H4K16ac) levels or locus specific histone acetylation, but instead works downstream in transcriptional regulation of MOF target genes. As part of the NSL complex it may be involved in acetylation of nucleosomal histone H4 on several lysine residues. The sequence is that of PHD finger protein 20 (Phf20) from Mus musculus (Mouse).